Consider the following 369-residue polypeptide: MRLKNIQVENFRNHHSLAFQPEEGITVLYGPNGSGKTSVLEAIHYCALTKSLLGAPESECLAFSEEYFIISGEFVSTRGTSLSVKVSYGKDRGKLVQLNQSEVKPFSQHVGTIPCITFSPSEIAIVNGSPGERRRFLDNALSQSDRRYLDELLDYRRVLQQRNALLLQLASSSGGSREMLDLWTENLADLAAGVTLRRISFLGELSVYFEPLQTSLAGKGSHLVTYRSSFGTIDSGLSRDELRDRYIKRFKETQRQELLRTQTMSGPHRDDLLFLSNGREIKKYGSQGQQRAFLISLKLALFRYFSHRLPESPICLFDDMFSELDAERTSEIFNILEDCGQTILTTTDGSLHPASQAVSVTALPGYRGG.

30–37 contacts ATP; the sequence is GPNGSGKT.

Belongs to the RecF family.

It is found in the cytoplasm. In terms of biological role, the RecF protein is involved in DNA metabolism; it is required for DNA replication and normal SOS inducibility. RecF binds preferentially to single-stranded, linear DNA. It also seems to bind ATP. This is DNA replication and repair protein RecF from Chlorobium luteolum (strain DSM 273 / BCRC 81028 / 2530) (Pelodictyon luteolum).